The sequence spans 637 residues: Biosynthetic arginine decarboxylase (637 aa).

Residue lysine 101 is modified to N6-(pyridoxal phosphate)lysine. Phenylalanine 286–tyrosine 296 is a binding site for substrate.

Belongs to the Orn/Lys/Arg decarboxylase class-II family. SpeA subfamily. Mg(2+) serves as cofactor. Requires pyridoxal 5'-phosphate as cofactor.

The enzyme catalyses L-arginine + H(+) = agmatine + CO2. The protein operates within amine and polyamine biosynthesis; agmatine biosynthesis; agmatine from L-arginine: step 1/1. In terms of biological role, catalyzes the biosynthesis of agmatine from arginine. The protein is Biosynthetic arginine decarboxylase of Shewanella putrefaciens (strain CN-32 / ATCC BAA-453).